A 211-amino-acid polypeptide reads, in one-letter code: Pyridoxine/pyridoxamine 5'-phosphate oxidase (211 aa).

Residues 7 to 10 (RRDY) and Lys65 each bind substrate. Residues 60–65 (RIVLLK), 75–76 (YT), Arg81, Lys82, and Gln104 contribute to the FMN site. The substrate site is built by Tyr122, Arg126, and Ser130. FMN contacts are provided by residues 139–140 (QS) and Trp184. Substrate is bound at residue 190 to 192 (RLH). Arg194 is a binding site for FMN.

It belongs to the pyridoxamine 5'-phosphate oxidase family. Homodimer. The cofactor is FMN.

It carries out the reaction pyridoxamine 5'-phosphate + O2 + H2O = pyridoxal 5'-phosphate + H2O2 + NH4(+). The catalysed reaction is pyridoxine 5'-phosphate + O2 = pyridoxal 5'-phosphate + H2O2. The protein operates within cofactor metabolism; pyridoxal 5'-phosphate salvage; pyridoxal 5'-phosphate from pyridoxamine 5'-phosphate: step 1/1. It participates in cofactor metabolism; pyridoxal 5'-phosphate salvage; pyridoxal 5'-phosphate from pyridoxine 5'-phosphate: step 1/1. In terms of biological role, catalyzes the oxidation of either pyridoxine 5'-phosphate (PNP) or pyridoxamine 5'-phosphate (PMP) into pyridoxal 5'-phosphate (PLP). The polypeptide is Pyridoxine/pyridoxamine 5'-phosphate oxidase (Aliivibrio salmonicida (strain LFI1238) (Vibrio salmonicida (strain LFI1238))).